Reading from the N-terminus, the 1173-residue chain is DNA-directed RNA polymerase subunit beta (1173 aa).

The tract at residues 1–23 is disordered; that stretch reads MEGSLLVASSTSNNETANTASTD. A compositionally biased stretch (low complexity) spans 8 to 22; that stretch reads ASSTSNNETANTAST.

This sequence belongs to the RNA polymerase beta chain family. In terms of assembly, the RNAP catalytic core consists of 2 alpha, 1 beta, 1 beta' and 1 omega subunit. When a sigma factor is associated with the core the holoenzyme is formed, which can initiate transcription.

It carries out the reaction RNA(n) + a ribonucleoside 5'-triphosphate = RNA(n+1) + diphosphate. Functionally, DNA-dependent RNA polymerase catalyzes the transcription of DNA into RNA using the four ribonucleoside triphosphates as substrates. The chain is DNA-directed RNA polymerase subunit beta from Paenarthrobacter aurescens (strain TC1).